The following is a 307-amino-acid chain: Elongation factor Ts (307 aa).

The tract at residues 80–83 is involved in Mg(2+) ion dislocation from EF-Tu; that stretch reads TDFV.

The protein belongs to the EF-Ts family.

Its subcellular location is the cytoplasm. Functionally, associates with the EF-Tu.GDP complex and induces the exchange of GDP to GTP. It remains bound to the aminoacyl-tRNA.EF-Tu.GTP complex up to the GTP hydrolysis stage on the ribosome. The protein is Elongation factor Ts of Clostridium botulinum (strain 657 / Type Ba4).